The primary structure comprises 258 residues: Protein U52 (258 aa).

It belongs to the herpesviridae UL79 family.

The polypeptide is Protein U52 (U52) (Human herpesvirus 6A (strain Uganda-1102) (HHV-6 variant A)).